The following is a 489-amino-acid chain: N-succinylglutamate 5-semialdehyde dehydrogenase (489 aa).

223–228 (GSSRTG) is a binding site for NAD(+). Residues glutamate 246 and cysteine 280 contribute to the active site.

The protein belongs to the aldehyde dehydrogenase family. AstD subfamily.

The enzyme catalyses N-succinyl-L-glutamate 5-semialdehyde + NAD(+) + H2O = N-succinyl-L-glutamate + NADH + 2 H(+). It participates in amino-acid degradation; L-arginine degradation via AST pathway; L-glutamate and succinate from L-arginine: step 4/5. Functionally, catalyzes the NAD-dependent reduction of succinylglutamate semialdehyde into succinylglutamate. This is N-succinylglutamate 5-semialdehyde dehydrogenase from Aeromonas hydrophila subsp. hydrophila (strain ATCC 7966 / DSM 30187 / BCRC 13018 / CCUG 14551 / JCM 1027 / KCTC 2358 / NCIMB 9240 / NCTC 8049).